We begin with the raw amino-acid sequence, 337 residues long: Eukaryotic translation initiation factor 3 subunit H (337 aa).

Positions Val21–Ala153 constitute an MPN domain.

The protein belongs to the eIF-3 subunit H family. As to quaternary structure, component of the eukaryotic translation initiation factor 3 (eIF-3) complex.

Its subcellular location is the cytoplasm. In terms of biological role, component of the eukaryotic translation initiation factor 3 (eIF-3) complex, which is involved in protein synthesis of a specialized repertoire of mRNAs and, together with other initiation factors, stimulates binding of mRNA and methionyl-tRNAi to the 40S ribosome. The eIF-3 complex specifically targets and initiates translation of a subset of mRNAs involved in cell proliferation. This Bombyx mori (Silk moth) protein is Eukaryotic translation initiation factor 3 subunit H.